The following is a 128-amino-acid chain: Large ribosomal subunit protein uL22 (128 aa).

This sequence belongs to the universal ribosomal protein uL22 family. As to quaternary structure, part of the 50S ribosomal subunit.

This protein binds specifically to 23S rRNA; its binding is stimulated by other ribosomal proteins, e.g. L4, L17, and L20. It is important during the early stages of 50S assembly. It makes multiple contacts with different domains of the 23S rRNA in the assembled 50S subunit and ribosome. Its function is as follows. The globular domain of the protein is located near the polypeptide exit tunnel on the outside of the subunit, while an extended beta-hairpin is found that lines the wall of the exit tunnel in the center of the 70S ribosome. This Methylocella silvestris (strain DSM 15510 / CIP 108128 / LMG 27833 / NCIMB 13906 / BL2) protein is Large ribosomal subunit protein uL22.